The sequence spans 143 residues: Ribonuclease HI (143 aa).

An RNase H type-1 domain is found at 1 to 136 (MQEIEIFCDG…CDSLAKLEAQ (136 aa)). Mg(2+) contacts are provided by aspartate 9, glutamate 47, aspartate 69, and aspartate 128.

This sequence belongs to the RNase H family. As to quaternary structure, monomer. It depends on Mg(2+) as a cofactor.

The protein resides in the cytoplasm. It catalyses the reaction Endonucleolytic cleavage to 5'-phosphomonoester.. Its function is as follows. Endonuclease that specifically degrades the RNA of RNA-DNA hybrids. This chain is Ribonuclease HI (rnhA), found in Helicobacter pylori (strain ATCC 700392 / 26695) (Campylobacter pylori).